The sequence spans 469 residues: Aspartyl/glutamyl-tRNA(Asn/Gln) amidotransferase subunit B (469 aa).

Belongs to the GatB/GatE family. GatB subfamily. As to quaternary structure, heterotrimer of A, B and C subunits.

It carries out the reaction L-glutamyl-tRNA(Gln) + L-glutamine + ATP + H2O = L-glutaminyl-tRNA(Gln) + L-glutamate + ADP + phosphate + H(+). The catalysed reaction is L-aspartyl-tRNA(Asn) + L-glutamine + ATP + H2O = L-asparaginyl-tRNA(Asn) + L-glutamate + ADP + phosphate + 2 H(+). Allows the formation of correctly charged Asn-tRNA(Asn) or Gln-tRNA(Gln) through the transamidation of misacylated Asp-tRNA(Asn) or Glu-tRNA(Gln) in organisms which lack either or both of asparaginyl-tRNA or glutaminyl-tRNA synthetases. The reaction takes place in the presence of glutamine and ATP through an activated phospho-Asp-tRNA(Asn) or phospho-Glu-tRNA(Gln). The protein is Aspartyl/glutamyl-tRNA(Asn/Gln) amidotransferase subunit B of Methanococcus maripaludis (strain C7 / ATCC BAA-1331).